The primary structure comprises 88 residues: ATPase inhibitor mai-1, mitochondrial (88 aa).

Gly residues predominate over residues Met1–Gly18. The segment at Met1–Arg41 is disordered. The stretch at Phe39–Gly87 forms a coiled coil.

Belongs to the ATPase inhibitor family. Post-translationally, does not seem to include a transit peptide.

It localises to the mitochondrion. Functionally, thought to be a regulatory component of the ATP-synthesizing complex in the mitochondria. The sequence is that of ATPase inhibitor mai-1, mitochondrial (mai-1) from Caenorhabditis elegans.